The sequence spans 128 residues: Fruiting body differentiation protein 16 (128 aa).

The N-terminal stretch at Met-1–Ala-19 is a signal peptide.

Plays a role in the regulation of fruiting body development. The chain is Fruiting body differentiation protein 16 from Flammulina velutipes (Agaricus velutipes).